The sequence spans 556 residues: Dihydroxy-acid dehydratase (556 aa).

Asp-78 is a binding site for Mg(2+). Residue Cys-119 participates in [2Fe-2S] cluster binding. Residues Asp-120 and Lys-121 each contribute to the Mg(2+) site. Lys-121 bears the N6-carboxylysine mark. Cys-191 contributes to the [2Fe-2S] cluster binding site. A Mg(2+)-binding site is contributed by Glu-442. Residue Ser-468 is the Proton acceptor of the active site.

Belongs to the IlvD/Edd family. In terms of assembly, homodimer. [2Fe-2S] cluster is required as a cofactor. The cofactor is Mg(2+).

The catalysed reaction is (2R)-2,3-dihydroxy-3-methylbutanoate = 3-methyl-2-oxobutanoate + H2O. It catalyses the reaction (2R,3R)-2,3-dihydroxy-3-methylpentanoate = (S)-3-methyl-2-oxopentanoate + H2O. The protein operates within amino-acid biosynthesis; L-isoleucine biosynthesis; L-isoleucine from 2-oxobutanoate: step 3/4. It functions in the pathway amino-acid biosynthesis; L-valine biosynthesis; L-valine from pyruvate: step 3/4. Functions in the biosynthesis of branched-chain amino acids. Catalyzes the dehydration of (2R,3R)-2,3-dihydroxy-3-methylpentanoate (2,3-dihydroxy-3-methylvalerate) into 2-oxo-3-methylpentanoate (2-oxo-3-methylvalerate) and of (2R)-2,3-dihydroxy-3-methylbutanoate (2,3-dihydroxyisovalerate) into 2-oxo-3-methylbutanoate (2-oxoisovalerate), the penultimate precursor to L-isoleucine and L-valine, respectively. The polypeptide is Dihydroxy-acid dehydratase (Clostridium kluyveri (strain NBRC 12016)).